Consider the following 233-residue polypeptide: Mediator of RNA polymerase II transcription subunit 7 (233 aa).

K185 is covalently cross-linked (Glycyl lysine isopeptide (Lys-Gly) (interchain with G-Cter in SUMO1); alternate). K185 participates in a covalent cross-link: Glycyl lysine isopeptide (Lys-Gly) (interchain with G-Cter in SUMO2); alternate. The disordered stretch occupies residues 188 to 213 (PMDADDSNNCTGQSDQQRENSGHRRD). A Phosphoserine modification is found at S194. Residues 203 to 213 (QQRENSGHRRD) are compositionally biased toward basic and acidic residues.

Belongs to the Mediator complex subunit 7 family. In terms of assembly, component of the Mediator complex, which is composed of MED1, MED4, MED6, MED7, MED8, MED9, MED10, MED11, MED12, MED13, MED13L, MED14, MED15, MED16, MED17, MED18, MED19, MED20, MED21, MED22, MED23, MED24, MED25, MED26, MED27, MED29, MED30, MED31, CCNC, CDK8 and CDC2L6/CDK11. The MED12, MED13, CCNC and CDK8 subunits form a distinct module termed the CDK8 module. Mediator containing the CDK8 module is less active than Mediator lacking this module in supporting transcriptional activation. Individual preparations of the Mediator complex lacking one or more distinct subunits have been variously termed ARC, CRSP, DRIP, PC2, SMCC and TRAP.

It localises to the nucleus. Component of the Mediator complex, a coactivator involved in the regulated transcription of nearly all RNA polymerase II-dependent genes. Mediator functions as a bridge to convey information from gene-specific regulatory proteins to the basal RNA polymerase II transcription machinery. Mediator is recruited to promoters by direct interactions with regulatory proteins and serves as a scaffold for the assembly of a functional preinitiation complex with RNA polymerase II and the general transcription factors. This is Mediator of RNA polymerase II transcription subunit 7 (MED7) from Sus scrofa (Pig).